The following is a 370-amino-acid chain: WAT1-related protein At1g44800 (370 aa).

10 helical membrane-spanning segments follow: residues 11–31 (PILAIISLQFGYAGMYIITMV), 41–61 (VLATYRHVVATVVMAPFALMF), 67–87 (PKMTLAIFWRLLALGILEPLM), 102–122 (SYTSAFTNALPAVTFILALIF), 142–162 (VITVGGAMIMTLYKGPAIEIV), 182–202 (WVLGTIAIMGSISTWAAFFIL), 216–236 (LVTLICGIGTILNAIASLIMV), 252–272 (AAVYSGVVCSGIAYYIQSIVI), 278–298 (VFTTSFSPMCMIITAFLGALV), and 303–323 (IHLGSIIGAVFIVLGLYSVVW). EamA domains follow at residues 23-143 (AGMY…GTVI) and 195-322 (TWAA…YSVV).

Belongs to the drug/metabolite transporter (DMT) superfamily. Plant drug/metabolite exporter (P-DME) (TC 2.A.7.4) family.

It is found in the membrane. This chain is WAT1-related protein At1g44800, found in Arabidopsis thaliana (Mouse-ear cress).